Here is a 259-residue protein sequence, read N- to C-terminus: Thiazole synthase (259 aa).

Lysine 99 serves as the catalytic Schiff-base intermediate with DXP. 1-deoxy-D-xylulose 5-phosphate contacts are provided by residues glycine 160, 186–187 (AG), and 208–209 (NT).

The protein belongs to the ThiG family. Homotetramer. Forms heterodimers with either ThiH or ThiS.

It is found in the cytoplasm. The enzyme catalyses [ThiS sulfur-carrier protein]-C-terminal-Gly-aminoethanethioate + 2-iminoacetate + 1-deoxy-D-xylulose 5-phosphate = [ThiS sulfur-carrier protein]-C-terminal Gly-Gly + 2-[(2R,5Z)-2-carboxy-4-methylthiazol-5(2H)-ylidene]ethyl phosphate + 2 H2O + H(+). It functions in the pathway cofactor biosynthesis; thiamine diphosphate biosynthesis. Its function is as follows. Catalyzes the rearrangement of 1-deoxy-D-xylulose 5-phosphate (DXP) to produce the thiazole phosphate moiety of thiamine. Sulfur is provided by the thiocarboxylate moiety of the carrier protein ThiS. In vitro, sulfur can be provided by H(2)S. This chain is Thiazole synthase, found in Porphyromonas gingivalis (strain ATCC BAA-308 / W83).